The sequence spans 206 residues: Small ribosomal subunit protein uS4 (206 aa).

The disordered stretch occupies residues Leu29–Ser52. An S4 RNA-binding domain is found at Arg96–Val171.

Belongs to the universal ribosomal protein uS4 family. As to quaternary structure, part of the 30S ribosomal subunit. Contacts protein S5. The interaction surface between S4 and S5 is involved in control of translational fidelity.

Functionally, one of the primary rRNA binding proteins, it binds directly to 16S rRNA where it nucleates assembly of the body of the 30S subunit. Its function is as follows. With S5 and S12 plays an important role in translational accuracy. This chain is Small ribosomal subunit protein uS4, found in Deinococcus deserti (strain DSM 17065 / CIP 109153 / LMG 22923 / VCD115).